A 143-amino-acid polypeptide reads, in one-letter code: Transcriptional regulator MraZ (143 aa).

SpoVT-AbrB domains follow at residues 5–47 (TYEP…SAEE) and 76–119 (ASDE…DAAA).

It belongs to the MraZ family. Forms oligomers.

Its subcellular location is the cytoplasm. The protein resides in the nucleoid. The polypeptide is Transcriptional regulator MraZ (Kocuria rhizophila (strain ATCC 9341 / DSM 348 / NBRC 103217 / DC2201)).